Reading from the N-terminus, the 202-residue chain is Putative 5'(3')-deoxyribonucleotidase (202 aa).

Asp22 serves as the catalytic Nucleophile. Residues Asp22, Asp24, and Asp156 each contribute to the Mg(2+) site. Residue Asp24 is the Proton donor of the active site.

This sequence belongs to the 5'(3')-deoxyribonucleotidase family. Mg(2+) serves as cofactor.

Dephosphorylates the 5' and 2'(3')-phosphates of deoxyribonucleotides. This Chlorobaculum tepidum (strain ATCC 49652 / DSM 12025 / NBRC 103806 / TLS) (Chlorobium tepidum) protein is Putative 5'(3')-deoxyribonucleotidase.